The primary structure comprises 549 residues: Oxygen-dependent choline dehydrogenase (549 aa).

Asp-4 to Glu-33 serves as a coordination point for FAD. His-465 (proton acceptor) is an active-site residue.

This sequence belongs to the GMC oxidoreductase family. The cofactor is FAD.

It carries out the reaction choline + A = betaine aldehyde + AH2. The catalysed reaction is betaine aldehyde + NAD(+) + H2O = glycine betaine + NADH + 2 H(+). It functions in the pathway amine and polyamine biosynthesis; betaine biosynthesis via choline pathway; betaine aldehyde from choline (cytochrome c reductase route): step 1/1. Involved in the biosynthesis of the osmoprotectant glycine betaine. Catalyzes the oxidation of choline to betaine aldehyde and betaine aldehyde to glycine betaine at the same rate. This Brucella ovis (strain ATCC 25840 / 63/290 / NCTC 10512) protein is Oxygen-dependent choline dehydrogenase.